We begin with the raw amino-acid sequence, 264 residues long: Thymidylate synthase (264 aa).

R21 serves as a coordination point for dUMP. H51 contacts (6R)-5,10-methylene-5,6,7,8-tetrahydrofolate. DUMP is bound at residue 126–127; that stretch reads RR. C146 serves as the catalytic Nucleophile. DUMP-binding positions include 166-169, N177, and 207-209; these read RSAD and HLY. (6R)-5,10-methylene-5,6,7,8-tetrahydrofolate is bound at residue D169. Residue S263 participates in (6R)-5,10-methylene-5,6,7,8-tetrahydrofolate binding.

This sequence belongs to the thymidylate synthase family. Bacterial-type ThyA subfamily. In terms of assembly, homodimer.

The protein resides in the cytoplasm. The enzyme catalyses dUMP + (6R)-5,10-methylene-5,6,7,8-tetrahydrofolate = 7,8-dihydrofolate + dTMP. Its pathway is pyrimidine metabolism; dTTP biosynthesis. Its function is as follows. Catalyzes the reductive methylation of 2'-deoxyuridine-5'-monophosphate (dUMP) to 2'-deoxythymidine-5'-monophosphate (dTMP) while utilizing 5,10-methylenetetrahydrofolate (mTHF) as the methyl donor and reductant in the reaction, yielding dihydrofolate (DHF) as a by-product. This enzymatic reaction provides an intracellular de novo source of dTMP, an essential precursor for DNA biosynthesis. This Neisseria gonorrhoeae (strain ATCC 700825 / FA 1090) protein is Thymidylate synthase.